We begin with the raw amino-acid sequence, 105 residues long: Cysteine-rich venom protein VAR2 (105 aa).

The first 22 residues, 1–22, serve as a signal peptide directing secretion; sequence MILLKLYLTLAAILCQSRGTTS.

It belongs to the CRISP family. Post-translationally, contains 8 disulfide bonds. In terms of tissue distribution, expressed by the venom gland.

Its subcellular location is the secreted. In terms of biological role, blocks ryanodine receptors, and potassium channels. This Varanus acanthurus (Ridge-tailed monitor) protein is Cysteine-rich venom protein VAR2.